Reading from the N-terminus, the 134-residue chain is Replication enhancer protein (134 aa).

The protein belongs to the geminiviridae replication enhancer protein family. In terms of assembly, homooligomer. Interacts with the replication-associated protein (REP). Interacts with host proliferating cell nuclear antigen (PCNA). Interacts with host retinoblastoma-related protein 1 (RBR1), and may thereby deregulate the host cell cycle. Oligomerization and interaction with PCNA are necessary for optimal replication enhancement.

Increases viral DNA accumulation. Enhances infectivity and symptom expression. The sequence is that of Replication enhancer protein from Nicotiana tabacum (Common tobacco).